The sequence spans 1863 residues: C-myc promoter-binding protein (1863 aa).

An MABP domain is found at 42–200; that stretch reads KEPITDVSVI…AVYLCYKKSV (159 aa). One can recognise a uDENN domain in the interval 192 to 364; the sequence is VYLCYKKSVA…KVPFPSPQRP (173 aa). The region spanning 385–521 is the cDENN domain; it reads PLPLSGGKFS…PCKNLMNTLN (137 aa). Residues 523–641 form the dDENN domain; the sequence is LHQQLAKLQQ…CSFVSDKDAS (119 aa). Phosphoserine is present on S731. PPR repeat units follow at residues 772-808 and 809-843; these read WFICLPAYVKVCHSKVRALKTAYDVLKKMQSKKMDPP and DEVCYRILMQLCGQYDQPVLAVRVLFEMQKAGIDP. Residues 905 to 952 form a disordered region; that stretch reads DLGYNSLSKDEVRRGDTSTEDIQEEKDKKGSDCSSLSESESTKGSADC. Basic and acidic residues predominate over residues 912 to 921; that stretch reads SKDEVRRGDT. The short motif at 917 to 933 is the Bipartite nuclear localization signal element; the sequence is RRGDTSTEDIQEEKDKK. Low complexity predominate over residues 936 to 949; it reads DCSSLSESESTKGS. A phosphoserine mark is found at S1015, S1035, S1099, S1151, and S1152. The segment at 1075 to 1111 is disordered; it reads TRPNTLDIGKPPLRSKRDSLEKESSDDDTPFDGSNYL. Positions 1177-1202 are disordered; it reads TEQQQKEEEEEDEDDSKSISTPSARR. A phosphoserine mark is found at S1225, S1240, and S1251. Disordered stretches follow at residues 1237–1306 and 1348–1375; these read NKKS…SPSF and SKDQSSDRTSLSSVGAQDSESTSLTDED. Over residues 1269 to 1279 the composition is skewed to basic and acidic residues; sequence TKSEEKPRDRL. At S1281 the chain carries Phosphoserine. 2 stretches are compositionally biased toward polar residues: residues 1297–1306 and 1348–1371; these read DTLTHSSPSF and SKDQSSDRTSLSSVGAQDSESTSL. S1508, S1587, S1589, and S1591 each carry phosphoserine.

In terms of tissue distribution, expressed ubiquitously. Highest expression in bone marrow, medium in peripheral blood lymphocytes and lowest in spleen. In brain, breast, and prostate, higher expression was seen in normal cells than in tumor cells. Expression is regulated in a growth- and cell cycle-dependent manner.

The protein localises to the nucleus. In terms of biological role, probable guanine nucleotide exchange factor (GEF) which may activate RAB10. Promotes the exchange of GDP to GTP, converting inactive GDP-bound Rab proteins into their active GTP-bound form. According to PubMed:8056341, it may bind to ISRE-like element (interferon-stimulated response element) of MYC P2 promoter. The protein is C-myc promoter-binding protein (DENND4A) of Homo sapiens (Human).